The primary structure comprises 402 residues: MVLEATMICIDNSEWMRNGDYSPSRFQAQADAVNLICGAKTQSNPENTVGVMTMAGKGVRVLVTPTSDLGKILACMHGLEVGAEANLAAAIQVAQLALKHRQNKRQQQRIIAFIGSPVKYDKKVLETIGKKLKKNNVALDIVDFGETDDDKPEKLEALISAVNSSDSSHIVHVPPGENALSDVLISTPIFTGEEGGSGFAASAAAAAATGAAGFEFDVDPNVDPELALALRLSMEEERARQEAIAKKAAEESSGAENKDHASSSNADSVMAEAEPASNAADDKKDQPKEDDDAQLLQQALAMSMEEGSSGAAAADAAMAEAAVDDQDLALALQMSVQDAGGSSQSDMSKVFEDRSFVTSILNSLPGVDPNDPSVKDLLASLHGQGEQEKKEDKSDKPEDEKK.

Positions 5 to 189 (ATMICIDNSE…LSDVLISTPI (185 aa)) constitute a VWFA domain. The 20-residue stretch at 221–240 (NVDPELALALRLSMEEERAR) folds into the UIM 1 domain. Residues 241 to 261 (QEAIAKKAAEESSGAENKDHA) are compositionally biased toward basic and acidic residues. Disordered regions lie at residues 241–292 (QEAI…EDDD) and 302–321 (MSMEEGSSGAAAADAAMAEA). UIM domains lie at 291-310 (DDAQLLQQALAMSMEEGSSG) and 323-342 (VDDQDLALALQMSVQDAGGS). Residues 363 to 402 (SLPGVDPNDPSVKDLLASLHGQGEQEKKEDKSDKPEDEKK) form a disordered region. Residues 385–402 (GEQEKKEDKSDKPEDEKK) are compositionally biased toward basic and acidic residues.

Belongs to the proteasome subunit S5A family. In terms of assembly, component of the 19S regulatory particle (RP/PA700) base subcomplex of the 26S proteasome. The 26S proteasome is composed of a core protease (CP), known as the 20S proteasome, capped at one or both ends by the 19S regulatory particle (RP/PA700). The RP/PA700 complex is composed of at least 17 different subunits in two subcomplexes, the base and the lid, which form the portions proximal and distal to the 20S proteolytic core, respectively. Interacts with PI4KG4.

In terms of biological role, plays a role in maintaining the structural integrity of the 19S regulatory particle (RP), subcomplex of the 26S proteasome. Plays a major role in both the direct and indirect recognition of ubiquitinated substrates of ubiquitin/26S proteasome-mediated proteolysis (UPP). Binds and presumably selects ubiquitin-conjugates for destruction. In Oryza sativa subsp. japonica (Rice), this protein is 26S proteasome non-ATPase regulatory subunit 4 homolog.